The following is a 424-amino-acid chain: Tyrosine--tRNA ligase (424 aa).

Y37 provides a ligand contact to L-tyrosine. Positions 42–51 match the 'HIGH' region motif; that stretch reads PTADSLHLGH. Y175 and Q179 together coordinate L-tyrosine. The 'KMSKS' region motif lies at 235 to 239; it reads KFGKT. K238 lines the ATP pocket. Positions 357–414 constitute an S4 RNA-binding domain; the sequence is ADLQQALVAAELVPSRGQARTLISSNAVSVNGEKQASIDYVFDDADRLYSRYTLLRRG.

Belongs to the class-I aminoacyl-tRNA synthetase family. TyrS type 1 subfamily. In terms of assembly, homodimer.

The protein localises to the cytoplasm. The catalysed reaction is tRNA(Tyr) + L-tyrosine + ATP = L-tyrosyl-tRNA(Tyr) + AMP + diphosphate + H(+). Functionally, catalyzes the attachment of tyrosine to tRNA(Tyr) in a two-step reaction: tyrosine is first activated by ATP to form Tyr-AMP and then transferred to the acceptor end of tRNA(Tyr). This chain is Tyrosine--tRNA ligase, found in Sodalis glossinidius (strain morsitans).